A 160-amino-acid polypeptide reads, in one-letter code: Large ribosomal subunit protein eL14 (160 aa).

A disordered region spans residues 136 to 160 (SDGTPRILKKDRRERLRAEKAKAKK). Residues 146-160 (DRRERLRAEKAKAKK) show a composition bias toward basic and acidic residues.

The protein belongs to the eukaryotic ribosomal protein eL14 family.

This chain is Large ribosomal subunit protein eL14 (RpL14), found in Drosophila virilis (Fruit fly).